We begin with the raw amino-acid sequence, 299 residues long: Coenzyme PQQ synthesis protein B (299 aa).

It belongs to the PqqB family.

Its pathway is cofactor biosynthesis; pyrroloquinoline quinone biosynthesis. May be involved in the transport of PQQ or its precursor to the periplasm. The protein is Coenzyme PQQ synthesis protein B of Xanthomonas oryzae pv. oryzae (strain MAFF 311018).